We begin with the raw amino-acid sequence, 216 residues long: RNA chaperone ProQ (216 aa).

Residues 105 to 115 are compositionally biased toward basic and acidic residues; sequence ESKAKVAEKRK. The disordered stretch occupies residues 105–159; that stretch reads ESKAKVAEKRKAQNAAKPGAKKSYKSKTVPAFKSSPKGTNQDNVKPKAKLPPPEK.

This sequence belongs to the ProQ family.

It localises to the cytoplasm. In terms of biological role, RNA chaperone with significant RNA binding, RNA strand exchange and RNA duplexing activities. This chain is RNA chaperone ProQ, found in Pseudoalteromonas atlantica (strain T6c / ATCC BAA-1087).